The primary structure comprises 359 residues: 3-dehydroquinate synthase (359 aa).

NAD(+) contacts are provided by residues 71 to 76 (DGEQYK), 105 to 109 (GVIGD), 129 to 130 (TT), lysine 142, lysine 151, and 169 to 172 (CLAT). 3 residues coordinate Zn(2+): glutamate 184, histidine 247, and histidine 264.

This sequence belongs to the sugar phosphate cyclases superfamily. Dehydroquinate synthase family. The cofactor is Co(2+). Zn(2+) is required as a cofactor. NAD(+) serves as cofactor.

It localises to the cytoplasm. It catalyses the reaction 7-phospho-2-dehydro-3-deoxy-D-arabino-heptonate = 3-dehydroquinate + phosphate. The protein operates within metabolic intermediate biosynthesis; chorismate biosynthesis; chorismate from D-erythrose 4-phosphate and phosphoenolpyruvate: step 2/7. Functionally, catalyzes the conversion of 3-deoxy-D-arabino-heptulosonate 7-phosphate (DAHP) to dehydroquinate (DHQ). This Baumannia cicadellinicola subsp. Homalodisca coagulata protein is 3-dehydroquinate synthase.